Consider the following 306-residue polypeptide: GTP-binding protein RAD (306 aa).

The span at 1 to 13 (MTLNGGSGAGGSR) shows a compositional bias: gly residues. Positions 1 to 91 (MTLNGGSGAG…GDSGSEDGVY (91 aa)) are disordered. Omega-N-methylarginine is present on arginine 23. Position 25 is a phosphoserine (serine 25). The span at 56–88 (AATAAGTRTQGQRLDWPEGSSDSLSSGDSGSED) shows a compositional bias: low complexity. GTP contacts are provided by residues 97 to 104 (GAPGVGKS) and 201 to 204 (NKSD). A calmodulin-binding region spans residues 276–295 (AKLFLGRIVARNSRKMAFLA).

It belongs to the small GTPase superfamily. RGK family. In terms of assembly, interacts with Calmodulin preferentially in the inactive, GDP-bound form. Interacts with CAMK2D. Interacts with CACNB2; interaction may be involved in beta-adrenergic regulation of heart rate and contractile force. Interaction with CACNB2 regulates the trafficking of CACNA1C to the cell membrane.

It is found in the cell membrane. Its function is as follows. May regulate basal voltage-dependent L-type Ca(2+) currents and be required for beta-adrenergic augmentation of Ca(2+) influx in cardiomyocytes, thereby regulating increases in heart rate and contractile force. May play an important role in cardiac antiarrhythmia via the strong suppression of voltage-dependent L-type Ca(2+) currents. Regulates voltage-gated L-type calcium channel subunit alpha-1C trafficking to the cell membrane. Inhibits cardiac hypertrophy through the calmodulin-dependent kinase II (CaMKII) pathway. Inhibits phosphorylation and activation of CAMK2D. This chain is GTP-binding protein RAD (Rrad), found in Rattus norvegicus (Rat).